The sequence spans 388 residues: Dual-specificity RNA methyltransferase RlmN (388 aa).

Glutamate 109 (proton acceptor) is an active-site residue. Residues 115 to 354 (EDDRATLCVS…TIVRKTRGDD (240 aa)) form the Radical SAM core domain. Cysteines 122 and 359 form a disulfide. Cysteine 129, cysteine 133, and cysteine 136 together coordinate [4Fe-4S] cluster. S-adenosyl-L-methionine is bound by residues 183–184 (GE), serine 215, 237–239 (SLH), and asparagine 316. Cysteine 359 (S-methylcysteine intermediate) is an active-site residue.

It belongs to the radical SAM superfamily. RlmN family. Requires [4Fe-4S] cluster as cofactor.

The protein localises to the cytoplasm. It carries out the reaction adenosine(2503) in 23S rRNA + 2 reduced [2Fe-2S]-[ferredoxin] + 2 S-adenosyl-L-methionine = 2-methyladenosine(2503) in 23S rRNA + 5'-deoxyadenosine + L-methionine + 2 oxidized [2Fe-2S]-[ferredoxin] + S-adenosyl-L-homocysteine. It catalyses the reaction adenosine(37) in tRNA + 2 reduced [2Fe-2S]-[ferredoxin] + 2 S-adenosyl-L-methionine = 2-methyladenosine(37) in tRNA + 5'-deoxyadenosine + L-methionine + 2 oxidized [2Fe-2S]-[ferredoxin] + S-adenosyl-L-homocysteine. Its function is as follows. Specifically methylates position 2 of adenine 2503 in 23S rRNA and position 2 of adenine 37 in tRNAs. m2A2503 modification seems to play a crucial role in the proofreading step occurring at the peptidyl transferase center and thus would serve to optimize ribosomal fidelity. The protein is Dual-specificity RNA methyltransferase RlmN of Salmonella typhi.